Reading from the N-terminus, the 141-residue chain is Light-regulated protein 1, chloroplastic (141 aa).

A chloroplast-targeting transit peptide spans 1-41 (MQGALFIKPTILLPLPSSVSSPKLTFLLPHATKASRLSSLR). Over residues 35 to 51 (SRLSSLRSNNSSSSSSL) the composition is skewed to low complexity. A disordered region spans residues 35–58 (SRLSSLRSNNSSSSSSLTSDPNTV). The interval 58-132 (VDYNSSILSV…ACDDLGGEFC (75 aa)) is 2 X 15 AA approximate repeats. 2 tandem repeats follow at residues 67–81 (VFPA…GYAC) and 118–132 (VFRE…GEFC).

In terms of assembly, component of high molecular weight thylakoid LFNRs-containing protein complexes containing LIR1, LFNR1, LFNR2, TIC62 and TROL proteins. Interacts directly with LFNR1 and LFNR2; LIR1 increases the affinity of LFNR1 and LFNR2 for TIC62 and subsequent thylakoid relocalization. In terms of processing, may form interchain disulfide bonds with LFNR1 and LFNR2.

Its subcellular location is the plastid. The protein resides in the chloroplast thylakoid membrane. It localises to the chloroplast envelope. The protein localises to the chloroplast stroma. Its function is as follows. Thylakoid-determinant subunit of high molecular weight LFNRs-containing protein complexes. In Arabidopsis thaliana (Mouse-ear cress), this protein is Light-regulated protein 1, chloroplastic.